A 150-amino-acid chain; its full sequence is Large ribosomal subunit protein bL9 (150 aa).

Belongs to the bacterial ribosomal protein bL9 family.

Functionally, binds to the 23S rRNA. This Streptococcus mutans serotype c (strain ATCC 700610 / UA159) protein is Large ribosomal subunit protein bL9.